The sequence spans 239 residues: Probable replication-associated protein repA2 (239 aa).

It belongs to the IncFII RepA family.

This protein is essential for plasmid replication; it is involved in copy control functions. The protein is Probable replication-associated protein repA2 (repA2) of Buchnera aphidicola subsp. Baizongia pistaciae (strain Bp).